The following is a 130-amino-acid chain: Small ribosomal subunit protein uS9 (130 aa).

This sequence belongs to the universal ribosomal protein uS9 family.

The sequence is that of Small ribosomal subunit protein uS9 from Streptococcus suis (strain 98HAH33).